Here is a 770-residue protein sequence, read N- to C-terminus: DNA topoisomerase 1 (770 aa).

In terms of domain architecture, Toprim spans 4-140 (FRIIIAEKAD…EIRRAKFSAL (137 aa)). Glu-10 and Asp-109 together coordinate Mg(2+). A Topo IA-type catalytic domain is found at 156 to 563 (NYSLADAADA…ESKKMLHEVL (408 aa)). The interaction with DNA stretch occupies residues 194–199 (SAGRVQ). Residue Tyr-312 is the O-(5'-phospho-DNA)-tyrosine intermediate of the active site. 3 consecutive C4-type zinc fingers follow at residues 611-638 (CEDP…CPVC), 673-700 (CPAD…YPKC), and 719-744 (CPYC…NMQC).

Belongs to the type IA topoisomerase family. As to quaternary structure, monomer. Mg(2+) serves as cofactor.

It catalyses the reaction ATP-independent breakage of single-stranded DNA, followed by passage and rejoining.. Releases the supercoiling and torsional tension of DNA, which is introduced during the DNA replication and transcription, by transiently cleaving and rejoining one strand of the DNA duplex. Introduces a single-strand break via transesterification at a target site in duplex DNA. The scissile phosphodiester is attacked by the catalytic tyrosine of the enzyme, resulting in the formation of a DNA-(5'-phosphotyrosyl)-enzyme intermediate and the expulsion of a 3'-OH DNA strand. The free DNA strand then undergoes passage around the unbroken strand, thus removing DNA supercoils. Finally, in the religation step, the DNA 3'-OH attacks the covalent intermediate to expel the active-site tyrosine and restore the DNA phosphodiester backbone. The protein is DNA topoisomerase 1 of Thermoplasma acidophilum (strain ATCC 25905 / DSM 1728 / JCM 9062 / NBRC 15155 / AMRC-C165).